A 177-amino-acid polypeptide reads, in one-letter code: ATP synthase subunit delta (177 aa).

It belongs to the ATPase delta chain family. F-type ATPases have 2 components, F(1) - the catalytic core - and F(0) - the membrane proton channel. F(1) has five subunits: alpha(3), beta(3), gamma(1), delta(1), epsilon(1). F(0) has three main subunits: a(1), b(2) and c(10-14). The alpha and beta chains form an alternating ring which encloses part of the gamma chain. F(1) is attached to F(0) by a central stalk formed by the gamma and epsilon chains, while a peripheral stalk is formed by the delta and b chains.

It is found in the cell inner membrane. F(1)F(0) ATP synthase produces ATP from ADP in the presence of a proton or sodium gradient. F-type ATPases consist of two structural domains, F(1) containing the extramembraneous catalytic core and F(0) containing the membrane proton channel, linked together by a central stalk and a peripheral stalk. During catalysis, ATP synthesis in the catalytic domain of F(1) is coupled via a rotary mechanism of the central stalk subunits to proton translocation. In terms of biological role, this protein is part of the stalk that links CF(0) to CF(1). It either transmits conformational changes from CF(0) to CF(1) or is implicated in proton conduction. The sequence is that of ATP synthase subunit delta from Cronobacter sakazakii (strain ATCC BAA-894) (Enterobacter sakazakii).